The following is a 344-amino-acid chain: Ketol-acid reductoisomerase (NADP(+)) (344 aa).

One can recognise a KARI N-terminal Rossmann domain in the interval 2 to 181 (AKVLYEKDIQ…GAARAGVLET (180 aa)). NADP(+) contacts are provided by residues 25–28 (YGSQ), arginine 48, serine 52, and 82–85 (DEMQ). The active site involves histidine 107. Position 133 (glycine 133) interacts with NADP(+). Residues 182–327 (SFQEETETDL…RELRELMPFV (146 aa)) enclose the KARI C-terminal knotted domain. Positions 190, 194, 226, and 230 each coordinate Mg(2+). Serine 251 contributes to the substrate binding site.

It belongs to the ketol-acid reductoisomerase family. Requires Mg(2+) as cofactor.

The enzyme catalyses (2R)-2,3-dihydroxy-3-methylbutanoate + NADP(+) = (2S)-2-acetolactate + NADPH + H(+). It carries out the reaction (2R,3R)-2,3-dihydroxy-3-methylpentanoate + NADP(+) = (S)-2-ethyl-2-hydroxy-3-oxobutanoate + NADPH + H(+). It functions in the pathway amino-acid biosynthesis; L-isoleucine biosynthesis; L-isoleucine from 2-oxobutanoate: step 2/4. Its pathway is amino-acid biosynthesis; L-valine biosynthesis; L-valine from pyruvate: step 2/4. In terms of biological role, involved in the biosynthesis of branched-chain amino acids (BCAA). Catalyzes an alkyl-migration followed by a ketol-acid reduction of (S)-2-acetolactate (S2AL) to yield (R)-2,3-dihydroxy-isovalerate. In the isomerase reaction, S2AL is rearranged via a Mg-dependent methyl migration to produce 3-hydroxy-3-methyl-2-ketobutyrate (HMKB). In the reductase reaction, this 2-ketoacid undergoes a metal-dependent reduction by NADPH to yield (R)-2,3-dihydroxy-isovalerate. The chain is Ketol-acid reductoisomerase (NADP(+)) from Oceanobacillus iheyensis (strain DSM 14371 / CIP 107618 / JCM 11309 / KCTC 3954 / HTE831).